The sequence spans 544 residues: Chaperonin GroEL 1 (544 aa).

ATP contacts are provided by residues 29–32, lysine 50, 86–90, glycine 414, and aspartate 494; these read TLGP and DGTTT.

Belongs to the chaperonin (HSP60) family. Forms a cylinder of 14 subunits composed of two heptameric rings stacked back-to-back. Interacts with the co-chaperonin GroES.

It localises to the cytoplasm. It catalyses the reaction ATP + H2O + a folded polypeptide = ADP + phosphate + an unfolded polypeptide.. In terms of biological role, together with its co-chaperonin GroES, plays an essential role in assisting protein folding. The GroEL-GroES system forms a nano-cage that allows encapsulation of the non-native substrate proteins and provides a physical environment optimized to promote and accelerate protein folding. The protein is Chaperonin GroEL 1 of Psychromonas ingrahamii (strain DSM 17664 / CCUG 51855 / 37).